Reading from the N-terminus, the 492-residue chain is Probable serine/threonine-protein kinase WNK9 (492 aa).

Residues Gly25–Leu282 form the Protein kinase domain. Residues Thr105–Phe108 and Lys155 each bind ATP. Residue Asp172 is the Proton acceptor of the active site.

Belongs to the protein kinase superfamily. Ser/Thr protein kinase family. WNK subfamily.

The catalysed reaction is L-seryl-[protein] + ATP = O-phospho-L-seryl-[protein] + ADP + H(+). The enzyme catalyses L-threonyl-[protein] + ATP = O-phospho-L-threonyl-[protein] + ADP + H(+). May regulate flowering time by modulating the photoperiod pathway. This chain is Probable serine/threonine-protein kinase WNK9 (WNK9), found in Arabidopsis thaliana (Mouse-ear cress).